A 234-amino-acid chain; its full sequence is Thioredoxin-dependent peroxide reductase, mitochondrial (234 aa).

Residues 1-30 constitute a mitochondrion transit peptide; sequence MSFVARSLIRNVPLMGKAILSQQKQIAARL. The Thioredoxin domain maps to 40–198; it reads VRVQQPAPDF…VLRLIKAFQF (159 aa). The active-site Cysteine sulfenic acid (-SOH) intermediate is the Cys85.

This sequence belongs to the peroxiredoxin family. AhpC/Prx1 subfamily. In terms of assembly, homodimer; disulfide-linked, upon oxidation. 6 homodimers assemble to form a ring-like dodecamer. Also exists as a monomer, however the monomeric form is present at a much lower level than the homodimeric form. Expressed in thoracic flight muscles (at protein level). Detected in the head and body (at protein level).

The protein resides in the mitochondrion. It carries out the reaction a hydroperoxide + [thioredoxin]-dithiol = an alcohol + [thioredoxin]-disulfide + H2O. Its function is as follows. Thiol-specific peroxidase that catalyzes the reduction of hydrogen peroxide and organic hydroperoxides to water and alcohols, respectively. Plays a role in cell protection against oxidative stress by detoxifying peroxides. May be involved in aging-associated changes in the responsiveness to oxidative stress. Involved in the maintenance of global thiol redox homeostasis. Functions in the central nervous system (CNS) and in motor neurons and is essential for normal motor function. The polypeptide is Thioredoxin-dependent peroxide reductase, mitochondrial (Drosophila melanogaster (Fruit fly)).